The primary structure comprises 154 residues: MMGGGGGGGGGGQMQQVAQEIEQMEQEVEAIDEEIERLREKQTDIDEAIEAIETLDSGSTVQVPLGGDAYIRATIEDIDEVVVSLGGGYSAEREQDGAVSTLETKKETLDDHISDLQEEKAEVETEMEELEQQAQQMQQQQMQQMMQQQEQEDE.

The segment at 119–154 is disordered; the sequence is EKAEVETEMEELEQQAQQMQQQQMQQMMQQQEQEDE. The segment covering 132 to 154 has biased composition (low complexity); sequence QQAQQMQQQQMQQMMQQQEQEDE.

It belongs to the prefoldin subunit alpha family. Heterohexamer of two alpha and four beta subunits.

It localises to the cytoplasm. Its function is as follows. Molecular chaperone capable of stabilizing a range of proteins. Seems to fulfill an ATP-independent, HSP70-like function in archaeal de novo protein folding. In Haloarcula marismortui (strain ATCC 43049 / DSM 3752 / JCM 8966 / VKM B-1809) (Halobacterium marismortui), this protein is Prefoldin subunit alpha.